A 660-amino-acid chain; its full sequence is Arginine--tRNA ligase, cytoplasmic (660 aa).

An N-acetylmethionine modification is found at Met-1. The could be involved in the assembly of the multisynthetase complex stretch occupies residues 1-72 (MDGLVAQCSA…QAERKRPTKN (72 aa)). Residues 200-202 (SPN), His-211, Tyr-384, Asp-388, and Gln-412 each bind L-arginine. The 'HIGH' region signature appears at 201-212 (PNIAKEMHVGHL). Positions 529–543 (NTAAYLLYAFTRIRS) are interaction with tRNA.

This sequence belongs to the class-I aminoacyl-tRNA synthetase family. As to quaternary structure, interacts (via N-terminus) with AIMP1 (via N-terminus); this stimulates its catalytic activity. Interacts (via N-terminus) with LARS2 (via C-terminus). Monomer. Part of a multisubunit complex that groups tRNA ligases for Arg (RARS1), Asp (DARS1), Gln (QARS1), Ile (IARS1), Leu (LARS1), Lys (KARS1), Met (MARS1) the bifunctional ligase for Glu and Pro (EPRS1) and the auxiliary subunits AIMP1/p43, AIMP2/p38 and EEF1E1/p18. Interacts with QARS1. Part of a complex composed of RARS1, QARS1 and AIMP1. As to expression, detected in dorsal root ganglion.

The protein resides in the cytoplasm. It is found in the cytosol. It catalyses the reaction tRNA(Arg) + L-arginine + ATP = L-arginyl-tRNA(Arg) + AMP + diphosphate. Its function is as follows. Forms part of a macromolecular complex that catalyzes the attachment of specific amino acids to cognate tRNAs during protein synthesis. Modulates the secretion of AIMP1 and may be involved in generation of the inflammatory cytokine EMAP2 from AIMP1. This chain is Arginine--tRNA ligase, cytoplasmic (Rars1), found in Rattus norvegicus (Rat).